A 489-amino-acid chain; its full sequence is Coronin-1B (489 aa).

Residue Ser-2 is modified to Phosphoserine. 5 WD repeats span residues 80–120, 130–170, 174–213, 217–260, and 265–305; these read GHTG…LTSP, GHTK…ELYR, LHPDLIYNVSWNRNGSLFCSACKDKSVRIIDPRQGTLVAE, AHEG…EPMA, and DSSN…PYIH. The segment at 414–443 is disordered; sequence DSRPAMAPGSSRLGAPASTTAAADATPSGS. The segment covering 427–443 has biased composition (low complexity); the sequence is GAPASTTAAADATPSGS. Residues 449-474 are a coiled coil; the sequence is EAGKLEEVMQELRALRALVKEQGERI.

It belongs to the WD repeat coronin family. In terms of assembly, forms homooligomers, but does not form complexes with the other coronins. Interacts with Arp2/3 complex components, including ACTR2, ARPC1B and ARPC2. Binds actin. In terms of processing, phosphorylation on Ser-2 regulates the interaction with the Arp2/3 complex and cell motility in fibroblasts. Phosphorylation does not seem to affect subcellular location.

Its subcellular location is the cytoplasm. It is found in the cytoskeleton. The protein localises to the stress fiber. Functionally, regulates leading edge dynamics and cell motility in fibroblasts. May be involved in cytokinesis and signal transduction. The sequence is that of Coronin-1B (CORO1B) from Pongo abelii (Sumatran orangutan).